The following is a 246-amino-acid chain: tRNA (guanine-N(7)-)-methyltransferase (246 aa).

Residues Glu-77, Glu-102, Asp-129, and Asp-152 each contribute to the S-adenosyl-L-methionine site. Residue Asp-152 is part of the active site. Substrate is bound by residues Lys-156, Asp-188, and 225–228; that span reads TKFE.

The protein belongs to the class I-like SAM-binding methyltransferase superfamily. TrmB family.

It catalyses the reaction guanosine(46) in tRNA + S-adenosyl-L-methionine = N(7)-methylguanosine(46) in tRNA + S-adenosyl-L-homocysteine. It participates in tRNA modification; N(7)-methylguanine-tRNA biosynthesis. Its function is as follows. Catalyzes the formation of N(7)-methylguanine at position 46 (m7G46) in tRNA. In Haemophilus influenzae (strain ATCC 51907 / DSM 11121 / KW20 / Rd), this protein is tRNA (guanine-N(7)-)-methyltransferase.